We begin with the raw amino-acid sequence, 1099 residues long: Mediator of RNA polymerase II transcription subunit 5 (1099 aa).

The segment at 41–66 (DNDDAKTQEGSGSQDKTDVEESISKP) is disordered.

It belongs to the Mediator complex subunit 5 family. As to quaternary structure, component of the Mediator complex.

It localises to the nucleus. Functionally, component of the Mediator complex, a coactivator involved in the regulated transcription of nearly all RNA polymerase II-dependent genes. Mediator functions as a bridge to convey information from gene-specific regulatory proteins to the basal RNA polymerase II transcription machinery. Mediator is recruited to promoters by direct interactions with regulatory proteins and serves as a scaffold for the assembly of a functional preinitiation complex with RNA polymerase II and the general transcription factors. The protein is Mediator of RNA polymerase II transcription subunit 5 (NUT1) of Candida glabrata (strain ATCC 2001 / BCRC 20586 / JCM 3761 / NBRC 0622 / NRRL Y-65 / CBS 138) (Yeast).